A 24-amino-acid chain; its full sequence is Brevinin-1E (24 aa).

Cysteine 18 and cysteine 24 form a disulfide bridge.

Expressed by the skin glands.

It is found in the secreted. Its function is as follows. Antimicrobial peptide. Stimulates insulin release by BRIN-BD11 cells in vitro. This chain is Brevinin-1E, found in Pelophylax saharicus (Sahara frog).